The primary structure comprises 817 residues: General transcription factor 3C polypeptide 4 (817 aa).

Met-1 is subject to N-acetylmethionine. A disordered region spans residues 1 to 40 (MSEADQALVGPKADEPSPPAEEKDEGGGKEAAADAAPGPS). Lys-221 is covalently cross-linked (Glycyl lysine isopeptide (Lys-Gly) (interchain with G-Cter in SUMO2)). Ser-600 and Ser-607 each carry phosphoserine. Residues 603–658 (LLVDSPGMGDGEDEQQEEGTSKQGTKAGLQEKSKEGDTEETPEDSLTAGGDTGGRE) form a disordered region. Lys-624 is covalently cross-linked (Glycyl lysine isopeptide (Lys-Gly) (interchain with G-Cter in SUMO2)). Ser-647 carries the phosphoserine modification.

Belongs to the TFIIIC subunit 4 family. In terms of assembly, part of the TFIIIC subcomplex TFIIIC2, consisting of six subunits, GTF3C1, GTF3C2, GTF3C3, GTF3C4, GTF3C5 and GTF3C6. Interacts with BRF1, GTF3C1, GTF3C2, GTF3C5, GTF3C6, POLR3C and POLR3F.

The protein localises to the nucleus. The catalysed reaction is L-lysyl-[protein] + acetyl-CoA = N(6)-acetyl-L-lysyl-[protein] + CoA + H(+). Functionally, essential for RNA polymerase III to make a number of small nuclear and cytoplasmic RNAs, including 5S RNA, tRNA, and adenovirus-associated (VA) RNA of both cellular and viral origin. Has histone acetyltransferase activity (HAT) with unique specificity for free and nucleosomal H3. May cooperate with GTF3C5 in facilitating the recruitment of TFIIIB and RNA polymerase through direct interactions with BRF1, POLR3C and POLR3F. May be localized close to the A box. The protein is General transcription factor 3C polypeptide 4 (Gtf3c4) of Mus musculus (Mouse).